The following is a 311-amino-acid chain: Purine nucleoside phosphorylase (311 aa).

N-acetylserine is present on serine 2. Residues serine 46, histidine 81, 101 to 103 (RLH), and alanine 134 contribute to the phosphate site. An a purine D-ribonucleoside-binding site is contributed by glutamate 219. Serine 238 serves as a coordination point for phosphate. Asparagine 261 lines the a purine D-ribonucleoside pocket. Serine 275 is modified (phosphoserine).

The protein belongs to the PNP/MTAP phosphorylase family.

It catalyses the reaction a purine D-ribonucleoside + phosphate = a purine nucleobase + alpha-D-ribose 1-phosphate. Its pathway is purine metabolism; purine nucleoside salvage. The purine nucleoside phosphorylases catalyze the phosphorolytic breakdown of the N-glycosidic bond in the beta-(deoxy)ribonucleoside molecules, with the formation of the corresponding free purine bases and pentose-1-phosphate. Cleaves guanosine and inosine. The protein is Purine nucleoside phosphorylase (PNP1) of Saccharomyces cerevisiae (strain ATCC 204508 / S288c) (Baker's yeast).